We begin with the raw amino-acid sequence, 286 residues long: MTALLIDGNALSKTLRGQAAERAAALTARGHQPGLAVILVGENPASEVYVRNKIKACEDNGFFSLKDAYPATLSEADLLARIDELNRDPKIHGILVQLPLPAHIDSHKVIEAIAPEKDVDGFHVANAGALMTGKPLFRPCTPYGVMKMFEAHGIALQGANAVVIGRSNIVGKPMAMMLLDAGATVTICHSKTRDLAAHTREADIVVAAVGKRNILTADMVKPGATVIDVGMNRDDAGKLCGDVDFAGVKEVAGYITPVPGGVGPMTITMLLINTIESAERAAAAAA.

Residues 165 to 167 (GRS) and Ser-190 each bind NADP(+).

It belongs to the tetrahydrofolate dehydrogenase/cyclohydrolase family. As to quaternary structure, homodimer.

It catalyses the reaction (6R)-5,10-methylene-5,6,7,8-tetrahydrofolate + NADP(+) = (6R)-5,10-methenyltetrahydrofolate + NADPH. The enzyme catalyses (6R)-5,10-methenyltetrahydrofolate + H2O = (6R)-10-formyltetrahydrofolate + H(+). The protein operates within one-carbon metabolism; tetrahydrofolate interconversion. In terms of biological role, catalyzes the oxidation of 5,10-methylenetetrahydrofolate to 5,10-methenyltetrahydrofolate and then the hydrolysis of 5,10-methenyltetrahydrofolate to 10-formyltetrahydrofolate. This chain is Bifunctional protein FolD, found in Burkholderia cenocepacia (strain ATCC BAA-245 / DSM 16553 / LMG 16656 / NCTC 13227 / J2315 / CF5610) (Burkholderia cepacia (strain J2315)).